The primary structure comprises 367 residues: Peptide chain release factor 2 (367 aa).

N5-methylglutamine is present on Q254.

This sequence belongs to the prokaryotic/mitochondrial release factor family. In terms of processing, methylated by PrmC. Methylation increases the termination efficiency of RF2.

The protein localises to the cytoplasm. Peptide chain release factor 2 directs the termination of translation in response to the peptide chain termination codons UGA and UAA. In Neisseria meningitidis serogroup B (strain ATCC BAA-335 / MC58), this protein is Peptide chain release factor 2.